Consider the following 301-residue polypeptide: Glycine--tRNA ligase alpha subunit (301 aa).

Belongs to the class-II aminoacyl-tRNA synthetase family. Tetramer of two alpha and two beta subunits.

It localises to the cytoplasm. It carries out the reaction tRNA(Gly) + glycine + ATP = glycyl-tRNA(Gly) + AMP + diphosphate. The protein is Glycine--tRNA ligase alpha subunit of Shewanella loihica (strain ATCC BAA-1088 / PV-4).